The primary structure comprises 668 residues: DNA ligase (668 aa).

NAD(+) is bound by residues 34–38, 83–84, and Glu-113; these read DAEYD and SL. The N6-AMP-lysine intermediate role is filled by Lys-115. The NAD(+) site is built by Arg-136, Glu-170, Lys-286, and Lys-310. Zn(2+) contacts are provided by Cys-404, Cys-407, Cys-422, and Cys-427. The BRCT domain maps to 590 to 668; it reads ESDSYFAGKT…EVKMLEELKK (79 aa).

Belongs to the NAD-dependent DNA ligase family. LigA subfamily. Requires Mg(2+) as cofactor. Mn(2+) is required as a cofactor.

The catalysed reaction is NAD(+) + (deoxyribonucleotide)n-3'-hydroxyl + 5'-phospho-(deoxyribonucleotide)m = (deoxyribonucleotide)n+m + AMP + beta-nicotinamide D-nucleotide.. Its function is as follows. DNA ligase that catalyzes the formation of phosphodiester linkages between 5'-phosphoryl and 3'-hydroxyl groups in double-stranded DNA using NAD as a coenzyme and as the energy source for the reaction. It is essential for DNA replication and repair of damaged DNA. The sequence is that of DNA ligase from Bacillus pumilus (strain SAFR-032).